A 425-amino-acid chain; its full sequence is Serine--tRNA ligase (425 aa).

An L-serine-binding site is contributed by 228–230; that stretch reads TAE. 259–261 is a binding site for ATP; sequence RSE. L-serine is bound at residue glutamate 282. 346–349 contributes to the ATP binding site; it reads EIAS. An L-serine-binding site is contributed by serine 382.

This sequence belongs to the class-II aminoacyl-tRNA synthetase family. Type-1 seryl-tRNA synthetase subfamily. Homodimer. The tRNA molecule binds across the dimer.

Its subcellular location is the cytoplasm. The enzyme catalyses tRNA(Ser) + L-serine + ATP = L-seryl-tRNA(Ser) + AMP + diphosphate + H(+). It carries out the reaction tRNA(Sec) + L-serine + ATP = L-seryl-tRNA(Sec) + AMP + diphosphate + H(+). It functions in the pathway aminoacyl-tRNA biosynthesis; selenocysteinyl-tRNA(Sec) biosynthesis; L-seryl-tRNA(Sec) from L-serine and tRNA(Sec): step 1/1. Its function is as follows. Catalyzes the attachment of serine to tRNA(Ser). Is also able to aminoacylate tRNA(Sec) with serine, to form the misacylated tRNA L-seryl-tRNA(Sec), which will be further converted into selenocysteinyl-tRNA(Sec). This Rickettsia massiliae (strain Mtu5) protein is Serine--tRNA ligase.